The sequence spans 207 residues: Large ribosomal subunit protein bL25 (207 aa).

The protein belongs to the bacterial ribosomal protein bL25 family. CTC subfamily. In terms of assembly, part of the 50S ribosomal subunit; part of the 5S rRNA/L5/L18/L25 subcomplex. Contacts the 5S rRNA. Binds to the 5S rRNA independently of L5 and L18.

In terms of biological role, this is one of the proteins that binds to the 5S RNA in the ribosome where it forms part of the central protuberance. The protein is Large ribosomal subunit protein bL25 of Brucella canis (strain ATCC 23365 / NCTC 10854 / RM-666).